A 144-amino-acid polypeptide reads, in one-letter code: Transcription antitermination protein NusB (144 aa).

This sequence belongs to the NusB family.

In terms of biological role, involved in transcription antitermination. Required for transcription of ribosomal RNA (rRNA) genes. Binds specifically to the boxA antiterminator sequence of the ribosomal RNA (rrn) operons. In Histophilus somni (strain 129Pt) (Haemophilus somnus), this protein is Transcription antitermination protein NusB.